The sequence spans 528 residues: 3-ketoacyl-CoA synthase 2 (528 aa).

Transmembrane regions (helical) follow at residues 36–56 (LGYHYLISNAVYILILPVGLL) and 78–98 (FHFLSSTLFAALLIFLTTLYF). The FAE domain maps to 97 to 388 (YFTTRPRRIF…FFATLVARKV (292 aa)). Residues Cys-241, His-320, His-407, His-411, and Asn-444 contribute to the active site.

It belongs to the thiolase-like superfamily. Chalcone/stilbene synthases family. In terms of tissue distribution, expressed in siliques, flowers and stems. In young seedlings, expressed in the central cylinder of primary roots, in emerging lateral roots and in their root cap, but not in aboveground tissues such as hypocotyls, cotyledons and leaves. Expressed in sepals in mature flowers and in the chalaza and micropyle region of developing seeds shortly prior to or just after the detachment from the funiculus. Expressed in roots, flowers, cauline leaves and siliques.

The protein localises to the membrane. The enzyme catalyses a very-long-chain acyl-CoA + malonyl-CoA + H(+) = a very-long-chain 3-oxoacyl-CoA + CO2 + CoA. It functions in the pathway lipid metabolism; fatty acid biosynthesis. With respect to regulation, inhibited by K3 herbicides such as allidochlor, anilofos, cafenstrole and flufenacet. Strongly inhibited by metazachlor. Its function is as follows. Mediates the synthesis of VLCFAs from 22 to 26 carbons in length (e.g. C22, C24, C26). Involved in the elongation of C20 fatty acid suberin precursors. Functionally redundant with KCS20 in the two-carbon elongation of C22 fatty acids that is required for cuticular wax and root suberin biosynthesis. The sequence is that of 3-ketoacyl-CoA synthase 2 from Arabidopsis thaliana (Mouse-ear cress).